The following is a 375-amino-acid chain: uncharacterized protein (375 aa).

Over 1–2 the chain is Cytoplasmic; sequence MR. Residues 3–23 traverse the membrane as a helical; Signal-anchor for type II membrane protein segment; it reads WYSYVIPAVILSIIAISGVWW. Residues 24–375 lie on the Lumenal side of the membrane; sequence NATLGTRLDQ…YIEQRLFPQP (352 aa).

This sequence belongs to the glycosyltransferase 34 family.

The protein resides in the endoplasmic reticulum membrane. Its subcellular location is the golgi apparatus membrane. This is an uncharacterized protein from Schizosaccharomyces pombe (strain 972 / ATCC 24843) (Fission yeast).